The primary structure comprises 196 residues: Pyridoxal 5'-phosphate synthase subunit PdxT (196 aa).

An L-glutamine-binding site is contributed by 47 to 49; sequence GES. The active-site Nucleophile is the cysteine 79. L-glutamine is bound by residues arginine 106 and 134–135; that span reads IR. Active-site charge relay system residues include histidine 170 and glutamate 172.

Belongs to the glutaminase PdxT/SNO family. In terms of assembly, in the presence of PdxS, forms a dodecamer of heterodimers. Only shows activity in the heterodimer.

It carries out the reaction aldehydo-D-ribose 5-phosphate + D-glyceraldehyde 3-phosphate + L-glutamine = pyridoxal 5'-phosphate + L-glutamate + phosphate + 3 H2O + H(+). The enzyme catalyses L-glutamine + H2O = L-glutamate + NH4(+). It participates in cofactor biosynthesis; pyridoxal 5'-phosphate biosynthesis. In terms of biological role, catalyzes the hydrolysis of glutamine to glutamate and ammonia as part of the biosynthesis of pyridoxal 5'-phosphate. The resulting ammonia molecule is channeled to the active site of PdxS. The polypeptide is Pyridoxal 5'-phosphate synthase subunit PdxT (Bacillus mycoides (strain KBAB4) (Bacillus weihenstephanensis)).